The chain runs to 914 residues: Isoleucine--tRNA ligase (914 aa).

The 'HIGH' region motif lies at 64-74 (PYANGNFHLGH). E557 contributes to the L-isoleucyl-5'-AMP binding site. The 'KMSKS' region signature appears at 598 to 602 (PMSKS). K601 is a binding site for ATP. Residues C889, C892, C906, and C909 each contribute to the Zn(2+) site.

It belongs to the class-I aminoacyl-tRNA synthetase family. IleS type 1 subfamily. As to quaternary structure, monomer. Zn(2+) serves as cofactor.

Its subcellular location is the cytoplasm. It carries out the reaction tRNA(Ile) + L-isoleucine + ATP = L-isoleucyl-tRNA(Ile) + AMP + diphosphate. In terms of biological role, catalyzes the attachment of isoleucine to tRNA(Ile). As IleRS can inadvertently accommodate and process structurally similar amino acids such as valine, to avoid such errors it has two additional distinct tRNA(Ile)-dependent editing activities. One activity is designated as 'pretransfer' editing and involves the hydrolysis of activated Val-AMP. The other activity is designated 'posttransfer' editing and involves deacylation of mischarged Val-tRNA(Ile). This Leptospira interrogans serogroup Icterohaemorrhagiae serovar Lai (strain 56601) protein is Isoleucine--tRNA ligase.